We begin with the raw amino-acid sequence, 462 residues long: 3-isopropylmalate dehydratase large subunit (462 aa).

3 residues coordinate [4Fe-4S] cluster: cysteine 337, cysteine 397, and cysteine 400.

The protein belongs to the aconitase/IPM isomerase family. LeuC type 1 subfamily. As to quaternary structure, heterodimer of LeuC and LeuD. Requires [4Fe-4S] cluster as cofactor.

The enzyme catalyses (2R,3S)-3-isopropylmalate = (2S)-2-isopropylmalate. Its pathway is amino-acid biosynthesis; L-leucine biosynthesis; L-leucine from 3-methyl-2-oxobutanoate: step 2/4. Catalyzes the isomerization between 2-isopropylmalate and 3-isopropylmalate, via the formation of 2-isopropylmaleate. The polypeptide is 3-isopropylmalate dehydratase large subunit (Listeria innocua serovar 6a (strain ATCC BAA-680 / CLIP 11262)).